We begin with the raw amino-acid sequence, 204 residues long: Probable proteasome subunit beta type-3 (204 aa).

The protein belongs to the peptidase T1B family. In terms of assembly, the 26S proteasome consists of a 20S proteasome core and two 19S regulatory subunits. The 20S proteasome core is composed of 28 subunits that are arranged in four stacked rings, resulting in a barrel-shaped structure. The two end rings are each formed by seven alpha subunits, and the two central rings are each formed by seven beta subunits. The catalytic chamber with the active sites is on the inside of the barrel.

It is found in the cytoplasm. The protein localises to the nucleus. Non-catalytic component of the proteasome, a multicatalytic proteinase complex which is characterized by its ability to cleave peptides with Arg, Phe, Tyr, Leu, and Glu adjacent to the leaving group at neutral or slightly basic pH. The proteasome has an ATP-dependent proteolytic activity. The polypeptide is Probable proteasome subunit beta type-3 (pup3) (Schizosaccharomyces pombe (strain 972 / ATCC 24843) (Fission yeast)).